The following is a 353-amino-acid chain: Photosystem II protein D1 (353 aa).

Threonine 2 is subject to N-acetylthreonine. At threonine 2 the chain carries Phosphothreonine. 3 helical membrane passes run 29–46 (YIGW…TATS), 118–133 (HFLL…EWEL), and 142–156 (WIAV…AATA). A chlorophyll a-binding site is contributed by histidine 118. Tyrosine 126 contacts pheophytin a. Residues aspartate 170 and glutamate 189 each contribute to the [CaMn4O5] cluster site. The chain crosses the membrane as a helical span at residues 197 to 218 (FHMLGVAGVFGGSLFSAMHGSL). Residue histidine 198 participates in chlorophyll a binding. Residues histidine 215 and 264–265 (SF) each bind a quinone. Residue histidine 215 participates in Fe cation binding. Histidine 272 serves as a coordination point for Fe cation. A helical membrane pass occupies residues 274–288 (FLAAWPVVGIWFTAL). [CaMn4O5] cluster-binding residues include histidine 332, glutamate 333, aspartate 342, and alanine 344. Positions 345 to 353 (ALEVPSING) are excised as a propeptide.

The protein belongs to the reaction center PufL/M/PsbA/D family. As to quaternary structure, PSII is composed of 1 copy each of membrane proteins PsbA, PsbB, PsbC, PsbD, PsbE, PsbF, PsbH, PsbI, PsbJ, PsbK, PsbL, PsbM, PsbT, PsbX, PsbY, PsbZ, Psb30/Ycf12, at least 3 peripheral proteins of the oxygen-evolving complex and a large number of cofactors. It forms dimeric complexes. The D1/D2 heterodimer binds P680, chlorophylls that are the primary electron donor of PSII, and subsequent electron acceptors. It shares a non-heme iron and each subunit binds pheophytin, quinone, additional chlorophylls, carotenoids and lipids. D1 provides most of the ligands for the Mn4-Ca-O5 cluster of the oxygen-evolving complex (OEC). There is also a Cl(-1) ion associated with D1 and D2, which is required for oxygen evolution. The PSII complex binds additional chlorophylls, carotenoids and specific lipids. is required as a cofactor. Tyr-161 forms a radical intermediate that is referred to as redox-active TyrZ, YZ or Y-Z. Post-translationally, C-terminally processed by CTPA; processing is essential to allow assembly of the oxygen-evolving complex and thus photosynthetic growth.

It localises to the plastid. The protein localises to the chloroplast thylakoid membrane. It carries out the reaction 2 a plastoquinone + 4 hnu + 2 H2O = 2 a plastoquinol + O2. In terms of biological role, photosystem II (PSII) is a light-driven water:plastoquinone oxidoreductase that uses light energy to abstract electrons from H(2)O, generating O(2) and a proton gradient subsequently used for ATP formation. It consists of a core antenna complex that captures photons, and an electron transfer chain that converts photonic excitation into a charge separation. The D1/D2 (PsbA/PsbD) reaction center heterodimer binds P680, the primary electron donor of PSII as well as several subsequent electron acceptors. This chain is Photosystem II protein D1, found in Agrostis stolonifera (Creeping bentgrass).